Reading from the N-terminus, the 256-residue chain is Imidazole glycerol phosphate synthase subunit HisF (256 aa).

Catalysis depends on residues Asp-12 and Asp-131.

This sequence belongs to the HisA/HisF family. In terms of assembly, heterodimer of HisH and HisF.

It localises to the cytoplasm. The enzyme catalyses 5-[(5-phospho-1-deoxy-D-ribulos-1-ylimino)methylamino]-1-(5-phospho-beta-D-ribosyl)imidazole-4-carboxamide + L-glutamine = D-erythro-1-(imidazol-4-yl)glycerol 3-phosphate + 5-amino-1-(5-phospho-beta-D-ribosyl)imidazole-4-carboxamide + L-glutamate + H(+). The protein operates within amino-acid biosynthesis; L-histidine biosynthesis; L-histidine from 5-phospho-alpha-D-ribose 1-diphosphate: step 5/9. Its function is as follows. IGPS catalyzes the conversion of PRFAR and glutamine to IGP, AICAR and glutamate. The HisF subunit catalyzes the cyclization activity that produces IGP and AICAR from PRFAR using the ammonia provided by the HisH subunit. The chain is Imidazole glycerol phosphate synthase subunit HisF from Pseudomonas putida (strain ATCC 700007 / DSM 6899 / JCM 31910 / BCRC 17059 / LMG 24140 / F1).